The sequence spans 464 residues: Argininosuccinate lyase (464 aa).

It belongs to the lyase 1 family. Argininosuccinate lyase subfamily.

It localises to the cytoplasm. The catalysed reaction is 2-(N(omega)-L-arginino)succinate = fumarate + L-arginine. It participates in amino-acid biosynthesis; L-arginine biosynthesis; L-arginine from L-ornithine and carbamoyl phosphate: step 3/3. This is Argininosuccinate lyase from Koribacter versatilis (strain Ellin345).